Reading from the N-terminus, the 278-residue chain is ADP-dependent (S)-NAD(P)H-hydrate dehydratase (278 aa).

A YjeF C-terminal domain is found at 5–272 (TTEIVSRTII…TRIPTYMHRF (268 aa)). (6S)-NADPHX-binding residues include alanine 40, glycine 103, and histidine 152. An AMP-binding site is contributed by glycine 214. (6S)-NADPHX is bound at residue aspartate 215.

Belongs to the NnrD/CARKD family. In terms of assembly, homotetramer. Mg(2+) is required as a cofactor.

The enzyme catalyses (6S)-NADHX + ADP = AMP + phosphate + NADH + H(+). It catalyses the reaction (6S)-NADPHX + ADP = AMP + phosphate + NADPH + H(+). Catalyzes the dehydration of the S-form of NAD(P)HX at the expense of ADP, which is converted to AMP. Together with NAD(P)HX epimerase, which catalyzes the epimerization of the S- and R-forms, the enzyme allows the repair of both epimers of NAD(P)HX, a damaged form of NAD(P)H that is a result of enzymatic or heat-dependent hydration. The chain is ADP-dependent (S)-NAD(P)H-hydrate dehydratase from Lactiplantibacillus plantarum (strain ATCC BAA-793 / NCIMB 8826 / WCFS1) (Lactobacillus plantarum).